Consider the following 879-residue polypeptide: Putative ankyrin repeat protein L88 (879 aa).

ANK repeat units lie at residues Lys22–Lys62, Lys63–Ile96, Glu100–Ala133, Asn137–Asp170, Asn174–Ala207, Asn211–Ala241, Lys245–Ala278, Lys282–Thr313, Arg317–His347, Glu351–Asn384, Ser387–Ile420, Asn424–Phe463, Asn470–Ser499, Ser506–Ile542, Asn546–Thr578, Ser674–Ile704, and Lys708–Ile738.

This chain is Putative ankyrin repeat protein L88, found in Acanthamoeba polyphaga mimivirus (APMV).